Here is a 181-residue protein sequence, read N- to C-terminus: Large ribosomal subunit protein eL18 (181 aa).

This sequence belongs to the eukaryotic ribosomal protein eL18 family.

It is found in the cytoplasm. In Dictyostelium discoideum (Social amoeba), this protein is Large ribosomal subunit protein eL18 (rpl18).